A 518-amino-acid chain; its full sequence is Zinc finger protein 449 (518 aa).

The region spanning 30-112 is the SCAN box domain; sequence RQRFRQFQYR…SLIEDLQREL (83 aa). Positions 292–304 are enriched in polar residues; the sequence is NPTLGETPENSNL. The interval 292 to 325 is disordered; the sequence is NPTLGETPENSNLEEPLNPKPHKKKSPGEKPHRC. 7 C2H2-type zinc fingers span residues 323–345, 351–373, 379–401, 407–429, 435–457, 463–485, and 491–513; these read HRCP…QRIH, HKCP…QRLH, YECT…QRTH, YKCL…LKTH, HRCH…QRTH, FKCN…LRIH, and YKCT…QVTH.

Belongs to the krueppel C2H2-type zinc-finger protein family.

It localises to the nucleus. In terms of biological role, may be involved in transcriptional regulation. The protein is Zinc finger protein 449 (ZNF449) of Gorilla gorilla gorilla (Western lowland gorilla).